We begin with the raw amino-acid sequence, 143 residues long: Nucleoside diphosphate kinase (143 aa).

The ATP site is built by K11, F59, R87, T93, R104, and N114. The Pros-phosphohistidine intermediate role is filled by H117.

Belongs to the NDK family. Homotetramer. Mg(2+) is required as a cofactor.

The protein resides in the cytoplasm. The enzyme catalyses a 2'-deoxyribonucleoside 5'-diphosphate + ATP = a 2'-deoxyribonucleoside 5'-triphosphate + ADP. The catalysed reaction is a ribonucleoside 5'-diphosphate + ATP = a ribonucleoside 5'-triphosphate + ADP. Major role in the synthesis of nucleoside triphosphates other than ATP. The ATP gamma phosphate is transferred to the NDP beta phosphate via a ping-pong mechanism, using a phosphorylated active-site intermediate. The sequence is that of Nucleoside diphosphate kinase from Acinetobacter baylyi (strain ATCC 33305 / BD413 / ADP1).